The primary structure comprises 118 residues: Ribonuclease P protein component (118 aa).

The protein belongs to the RnpA family. In terms of assembly, consists of a catalytic RNA component (M1 or rnpB) and a protein subunit.

It carries out the reaction Endonucleolytic cleavage of RNA, removing 5'-extranucleotides from tRNA precursor.. RNaseP catalyzes the removal of the 5'-leader sequence from pre-tRNA to produce the mature 5'-terminus. It can also cleave other RNA substrates such as 4.5S RNA. The protein component plays an auxiliary but essential role in vivo by binding to the 5'-leader sequence and broadening the substrate specificity of the ribozyme. This Mycoplasma pneumoniae (strain ATCC 29342 / M129 / Subtype 1) (Mycoplasmoides pneumoniae) protein is Ribonuclease P protein component.